Here is a 602-residue protein sequence, read N- to C-terminus: Probable translation initiation factor IF-2 (602 aa).

Residues 10-227 form the tr-type G domain; sequence LRQPIVVVLG…LLAGLTQNYM (218 aa). The tract at residues 19–26 is G1; that stretch reads GHVDHGKT. GTP is bound at residue 19–26; that stretch reads GHVDHGKT. The G2 stretch occupies residues 44-48; it reads EMTQE. Residues 83-86 form a G3 region; it reads DTPG. GTP-binding positions include 83 to 87 and 137 to 140; these read DTPGH and NKID. A G4 region spans residues 137–140; the sequence is NKID. The tract at residues 205–207 is G5; that stretch reads SAK.

Belongs to the TRAFAC class translation factor GTPase superfamily. Classic translation factor GTPase family. IF-2 subfamily.

Functionally, function in general translation initiation by promoting the binding of the formylmethionine-tRNA to ribosomes. Seems to function along with eIF-2. This Sulfurisphaera tokodaii (strain DSM 16993 / JCM 10545 / NBRC 100140 / 7) (Sulfolobus tokodaii) protein is Probable translation initiation factor IF-2.